The following is a 353-amino-acid chain: Mitochondrial import inner membrane translocase subunit TIM50 (353 aa).

The N-terminal 44 residues, 1–44, are a transit peptide targeting the mitochondrion; it reads MAASAAVFSRLRSGLRLGSRGLCTRLATPPRRAPDQAAEIGSRG. A disordered region spans residues 25–60; sequence RLATPPRRAPDQAAEIGSRGSTKAQGPQQQPGSEGP. Phosphoserine is present on S45. The Mitochondrial matrix portion of the chain corresponds to 45 to 65; the sequence is STKAQGPQQQPGSEGPSYAKK. The segment covering 49 to 60 has biased composition (low complexity); sequence QGPQQQPGSEGP. A helical transmembrane segment spans residues 66–86; the sequence is VALWLAGLLGAGGTVSVVYIF. Residues 87–353 lie on the Mitochondrial intermembrane side of the membrane; sequence GNNPVDENGA…SRLWPRSKQP (267 aa). The region spanning 143-286 is the FCP1 homology domain; it reads YYQPPYTLVL…LDLSAFLKTI (144 aa). At S341 the chain carries Phosphoserine.

It belongs to the TIM50 family. Component of the TIM23 complex at least composed of TIMM23, TIMM17 (TIMM17A or TIMM17B) and TIMM50; within this complex, directly interacts with TIMM23. The complex interacts with the TIMM44 component of the PAM complex and with DNAJC15. As to quaternary structure, interacts with COIL and snRNPs. In terms of tissue distribution, widely expressed. Expressed at higher level in brain, kidney and liver (at protein level).

The protein localises to the mitochondrion inner membrane. It is found in the nucleus speckle. Its function is as follows. Essential component of the TIM23 complex, a complex that mediates the translocation of transit peptide-containing proteins across the mitochondrial inner membrane. Has some phosphatase activity in vitro; however such activity may not be relevant in vivo. In terms of biological role, may participate in the release of snRNPs and SMN from the Cajal body. The protein is Mitochondrial import inner membrane translocase subunit TIM50 (TIMM50) of Homo sapiens (Human).